The following is a 510-amino-acid chain: uncharacterized protein (510 aa).

12 consecutive transmembrane segments (helical) span residues 17-37, 56-76, 111-131, 148-168, 180-200, 223-243, 261-281, 300-320, 355-375, 382-402, 434-454, and 472-492; these read LKLGIISLGLGGLYSIILVVL, LIIHVNLSILIWLLSITASVW, VLYIYPKLAFFATLLIAISPL, IVFILGLSLFGVTLLLYAINI, LVNVTVFSTIIMFILSFVCFG, LLFWSGGHLLQFIYTQILIFI, FYLFILYLNFVFSILILFGHI, YLGGIAPILCLVGMVVELVLM, IIKTILLCSITLFLLGGLIAI, LVIPAHYHGSIVGISIACMGY, AIYLLTFGQILHILGLAFSGI, and LLMGMMGIGGLIAIVGGLMFV.

It to A.aeolicus AQ_155.

It is found in the cell membrane. This is an uncharacterized protein from Rickettsia prowazekii (strain Madrid E).